Consider the following 529-residue polypeptide: V-set and immunoglobulin domain-containing protein 10 (529 aa).

Positions 1–18 are cleaved as a signal peptide; sequence MMITSAVVLYLLLLSHQT. Ig-like C2-type domains are found at residues 19–110 and 129–217; these read VSEE…QTLS and PATF…QELL. The Extracellular segment spans residues 21-411; it reads EEQVQQFVIG…LNVKTSAGNG (391 aa). N-linked (GlcNAc...) asparagine glycans are attached at residues asparagine 34, asparagine 35, asparagine 46, asparagine 135, asparagine 147, asparagine 159, asparagine 211, asparagine 269, asparagine 280, asparagine 284, asparagine 330, asparagine 357, and asparagine 376. Cysteine 40 and cysteine 96 are joined by a disulfide. An intrachain disulfide couples cysteine 150 to cysteine 199. The Ig-like C2-type 3 domain occupies 317 to 403; that stretch reads PTGQPLATAL…GARELEVYLN (87 aa). Cysteine 335 and cysteine 387 form a disulfide bridge. Residues 412-432 form a helical membrane-spanning segment; the sequence is GAIVGIFVSVLVMMIGIVVGV. Over 433–529 the chain is Cytoplasmic; the sequence is TVYTKRDRIC…PQRAELQPAV (97 aa).

It localises to the membrane. This Danio rerio (Zebrafish) protein is V-set and immunoglobulin domain-containing protein 10 (vsig10).